A 447-amino-acid chain; its full sequence is Serine/threonine-protein phosphatase 2A 55 kDa regulatory subunit B gamma isoform (447 aa).

7 WD repeats span residues 22–61 (TEAD…KNAP), 87–128 (EIEE…KRPE), 171–209 (GHTY…RSFN), 220–260 (DLTE…LCDK), 279–317 (EIIS…RPIE), 334–375 (ENDC…DVTL), and 410–446 (DFTK…NSDM).

This sequence belongs to the phosphatase 2A regulatory subunit B family. As to quaternary structure, PP2A consists of a common heterodimeric core enzyme, composed of a 36 kDa catalytic subunit (subunit C) and a 65 kDa constant regulatory subunit (PR65 or subunit A), that associates with a variety of regulatory subunits. Proteins that associate with the core dimer include three families of regulatory subunits B (the R2/B/PR55/B55, R3/B''/PR72/PR130/PR59 and R5/B'/B56 families), the 48 kDa variable regulatory subunit, viral proteins, and cell signaling molecules. Interacts with IER5.

Functionally, the B regulatory subunit might modulate substrate selectivity and catalytic activity, and might also direct the localization of the catalytic enzyme to a particular subcellular compartment. This Homo sapiens (Human) protein is Serine/threonine-protein phosphatase 2A 55 kDa regulatory subunit B gamma isoform (PPP2R2C).